A 195-amino-acid polypeptide reads, in one-letter code: Guanylate kinase (195 aa).

Positions 5–183 constitute a Guanylate kinase-like domain; that stretch reads GILFVISGPS…ALQKITAIII (179 aa). Residue 12 to 19 coordinates ATP; that stretch reads GPSGVGKG.

Belongs to the guanylate kinase family.

It localises to the cytoplasm. It catalyses the reaction GMP + ATP = GDP + ADP. Functionally, essential for recycling GMP and indirectly, cGMP. In Syntrophomonas wolfei subsp. wolfei (strain DSM 2245B / Goettingen), this protein is Guanylate kinase.